The following is a 368-amino-acid chain: Protein L-Myc (368 aa).

Disordered stretches follow at residues 39–79 (PPTS…RGHS), 112–179 (RLAP…EKRR), and 218–295 (FPPE…FLER). Positions 135–147 (LEASNPAPATQCQ) are enriched in polar residues. The segment covering 247–258 (EEEEEEEEEEEI) has biased composition (acidic residues). Residues 283 to 294 (DVTKRKNHNFLE) show a composition bias toward basic and acidic residues. One can recognise a bHLH domain in the interval 285 to 337 (TKRKNHNFLERKRRNDLRSRFLALRDQVPTLASCSKAPKVVILSKALEYLQAL). Positions 337-365 (LVGAEKKMATEKRQLRCRQQQLQKRIAYL) are leucine-zipper.

As to quaternary structure, efficient DNA binding requires dimerization with another bHLH protein. Binds DNA as a heterodimer with MAX.

It is found in the nucleus. The chain is Protein L-Myc (Mycl) from Mus musculus (Mouse).